Here is a 366-residue protein sequence, read N- to C-terminus: Left-right determination factor 1 (366 aa).

Residues Met1 to Ala21 form the signal peptide. A propeptide spans Leu22–Lys76 (or 135). Residue Asn158 is glycosylated (N-linked (GlcNAc...) asparagine). 4 disulfides stabilise this stretch: Cys251-Cys264, Cys263-Cys316, Cys293-Cys351, and Cys297-Cys353.

This sequence belongs to the TGF-beta family. In terms of processing, the processing of the protein may also occur at the second R-X-X-R site located at AA 132-135. Processing appears to be regulated in a cell-type specific manner.

The protein localises to the secreted. Its function is as follows. Required for left-right axis determination as a regulator of LEFTY2 and NODAL. The protein is Left-right determination factor 1 (LEFTY1) of Homo sapiens (Human).